The primary structure comprises 334 residues: Holliday junction branch migration complex subunit RuvB (334 aa).

Residues 1–181 (MSEFLTPERT…GIILELDFYT (181 aa)) form a large ATPase domain (RuvB-L) region. ADP-binding residues include Leu-19 and Arg-20. Glu-26, Phe-27, and Ile-28 together coordinate ATP. Residues Phe-27, Ile-28, Gly-61, Leu-62, Gly-63, Lys-64, Thr-65, and Thr-66 each coordinate ADP. Residues Leu-62 and Gly-63 each coordinate ATP. Residues 127-129 (EDF) and Arg-170 each bind ATP. Residues Tyr-180, Pro-216, and Arg-217 each contribute to the ADP site. Residues 182–255 (VKELKEIIKR…TMEVLNIDDE (74 aa)) form a small ATPAse domain (RuvB-S) region. ATP is bound at residue Pro-216. Positions 256-334 (GLDEFDRKIL…KYEVPENRLF (79 aa)) are head domain (RuvB-H). DNA contacts are provided by Arg-309 and Arg-314.

The protein belongs to the RuvB family. As to quaternary structure, homohexamer. Forms an RuvA(8)-RuvB(12)-Holliday junction (HJ) complex. HJ DNA is sandwiched between 2 RuvA tetramers; dsDNA enters through RuvA and exits via RuvB. An RuvB hexamer assembles on each DNA strand where it exits the tetramer. Each RuvB hexamer is contacted by two RuvA subunits (via domain III) on 2 adjacent RuvB subunits; this complex drives branch migration. In the full resolvosome a probable DNA-RuvA(4)-RuvB(12)-RuvC(2) complex forms which resolves the HJ.

The protein localises to the cytoplasm. It catalyses the reaction ATP + H2O = ADP + phosphate + H(+). Functionally, the RuvA-RuvB-RuvC complex processes Holliday junction (HJ) DNA during genetic recombination and DNA repair, while the RuvA-RuvB complex plays an important role in the rescue of blocked DNA replication forks via replication fork reversal (RFR). RuvA specifically binds to HJ cruciform DNA, conferring on it an open structure. The RuvB hexamer acts as an ATP-dependent pump, pulling dsDNA into and through the RuvAB complex. RuvB forms 2 homohexamers on either side of HJ DNA bound by 1 or 2 RuvA tetramers; 4 subunits per hexamer contact DNA at a time. Coordinated motions by a converter formed by DNA-disengaged RuvB subunits stimulates ATP hydrolysis and nucleotide exchange. Immobilization of the converter enables RuvB to convert the ATP-contained energy into a lever motion, pulling 2 nucleotides of DNA out of the RuvA tetramer per ATP hydrolyzed, thus driving DNA branch migration. The RuvB motors rotate together with the DNA substrate, which together with the progressing nucleotide cycle form the mechanistic basis for DNA recombination by continuous HJ branch migration. Branch migration allows RuvC to scan DNA until it finds its consensus sequence, where it cleaves and resolves cruciform DNA. In terms of biological role, promotes Holliday junction (HJ) branch migration in conjunction with RuvA. Subunits can be free, ADP- or ATP-bound; nucleotide binding changes during the reaction cycle. Has a DNA-dependent ATPase activity; dsDNA and supercoiled DNA but not ssDNA stimulate activity. This is Holliday junction branch migration complex subunit RuvB from Thermotoga maritima (strain ATCC 43589 / DSM 3109 / JCM 10099 / NBRC 100826 / MSB8).